Here is a 526-residue protein sequence, read N- to C-terminus: Meiotically up-regulated gene 99 protein, mitochondrial (526 aa).

The next 2 helical transmembrane spans lie at 398 to 418 and 421 to 441; these read TLYT…LYFV and FSLY…LYYL.

It is found in the mitochondrion membrane. Functionally, required for correct meiotic chromosome segregation. Appears to also have role in sporulation. The chain is Meiotically up-regulated gene 99 protein, mitochondrial (mug99) from Schizosaccharomyces pombe (strain 972 / ATCC 24843) (Fission yeast).